The primary structure comprises 192 residues: Imidazoleglycerol-phosphate dehydratase (192 aa).

Belongs to the imidazoleglycerol-phosphate dehydratase family.

The protein resides in the cytoplasm. It catalyses the reaction D-erythro-1-(imidazol-4-yl)glycerol 3-phosphate = 3-(imidazol-4-yl)-2-oxopropyl phosphate + H2O. It participates in amino-acid biosynthesis; L-histidine biosynthesis; L-histidine from 5-phospho-alpha-D-ribose 1-diphosphate: step 6/9. This chain is Imidazoleglycerol-phosphate dehydratase, found in Staphylococcus epidermidis (strain ATCC 12228 / FDA PCI 1200).